A 123-amino-acid chain; its full sequence is uncharacterized protein (123 aa).

Residues 17–117 (SNDNAFLVDV…NNQDKGWKQN (101 aa)) form the Rhodanese domain.

This is an uncharacterized protein from Rickettsia conorii (strain ATCC VR-613 / Malish 7).